Reading from the N-terminus, the 465-residue chain is Glutamate--tRNA ligase (465 aa).

A 'HIGH' region motif is present at residues 8-18; that stretch reads PSPTGHLHIGG. The Zn(2+) site is built by cysteine 97, cysteine 99, cysteine 124, and glutamate 126. The 'KMSKS' region signature appears at 234-238; the sequence is RLSKR. Lysine 237 serves as a coordination point for ATP.

This sequence belongs to the class-I aminoacyl-tRNA synthetase family. Glutamate--tRNA ligase type 1 subfamily. As to quaternary structure, monomer. Zn(2+) is required as a cofactor.

The protein resides in the cytoplasm. It carries out the reaction tRNA(Glu) + L-glutamate + ATP = L-glutamyl-tRNA(Glu) + AMP + diphosphate. Catalyzes the attachment of glutamate to tRNA(Glu) in a two-step reaction: glutamate is first activated by ATP to form Glu-AMP and then transferred to the acceptor end of tRNA(Glu). This is Glutamate--tRNA ligase from Thermodesulfovibrio yellowstonii (strain ATCC 51303 / DSM 11347 / YP87).